We begin with the raw amino-acid sequence, 858 residues long: ATP-dependent DNA helicase Q-like SIM (858 aa).

The 43-residue stretch at 2–44 folds into the UBA domain; sequence DLSSDQLVMKIVEMGFEKLDALEAVKAVGGKSCDDAVEYILKG. The Helicase ATP-binding domain occupies 177-353; the sequence is LSTWVAHKDC…LESLHLSKET (177 aa). Position 190-197 (190-197) interacts with ATP; it reads AATGSGKS. The DEAH box motif lies at 288-291; sequence DEAH. Residues 402 to 450 form a disordered region; the sequence is LAVISRESEEQTDFGSHDSENIHETDYDEDEEDQENSLAKKNSSNGKEL. Over residues 416–426 the composition is skewed to basic and acidic residues; that stretch reads GSHDSENIHET. Residues 427–436 show a composition bias toward acidic residues; that stretch reads DYDEDEEDQE. Over residues 437–448 the composition is skewed to polar residues; sequence NSLAKKNSSNGK. Residues 491–627 form the Helicase C-terminal domain; sequence EKQKDLEGLT…QTEQAYKMLS (137 aa). The tract at residues 822 to 858 is disordered; it reads RQRLERRERKPRRERKPRKKRTRGRSSTKLHPWRSKE. Over residues 830–858 the composition is skewed to basic residues; it reads RKPRRERKPRKKRTRGRSSTKLHPWRSKE.

It belongs to the helicase family. RecQ subfamily. It depends on Mg(2+) as a cofactor. Mn(2+) is required as a cofactor. Mostly expressed in roots and seedlings, and, to a lower extent, in leaves, shoots, shoot apical mersitem, inflorescences, flowers, siliques and seeds.

The protein resides in the nucleus. It carries out the reaction Couples ATP hydrolysis with the unwinding of duplex DNA by translocating in the 3'-5' direction.. The catalysed reaction is ATP + H2O = ADP + phosphate + H(+). Plant specific, probable 3'-5' DNA helicase that may play a role in the repair of DNA. This chain is ATP-dependent DNA helicase Q-like SIM (RECQSIM), found in Arabidopsis thaliana (Mouse-ear cress).